We begin with the raw amino-acid sequence, 660 residues long: Acetyl-coenzyme A synthetase (660 aa).

CoA contacts are provided by residues 197–200 and T317; that span reads RGGK. ATP-binding positions include 397-399, 421-426, D512, and R528; these read GEP and DTFWQT. Position 536 (S536) interacts with CoA. R539 contributes to the ATP binding site. Residues V550 and V555 each coordinate Mg(2+). K625 is modified (N6-acetyllysine).

Belongs to the ATP-dependent AMP-binding enzyme family. Mg(2+) serves as cofactor. Acetylated. Deacetylation by the SIR2-homolog deacetylase activates the enzyme.

The enzyme catalyses acetate + ATP + CoA = acetyl-CoA + AMP + diphosphate. In terms of biological role, catalyzes the conversion of acetate into acetyl-CoA (AcCoA), an essential intermediate at the junction of anabolic and catabolic pathways. AcsA undergoes a two-step reaction. In the first half reaction, AcsA combines acetate with ATP to form acetyl-adenylate (AcAMP) intermediate. In the second half reaction, it can then transfer the acetyl group from AcAMP to the sulfhydryl group of CoA, forming the product AcCoA. This is Acetyl-coenzyme A synthetase from Cupriavidus taiwanensis (strain DSM 17343 / BCRC 17206 / CCUG 44338 / CIP 107171 / LMG 19424 / R1) (Ralstonia taiwanensis (strain LMG 19424)).